Here is a 557-residue protein sequence, read N- to C-terminus: Hydroxylamine reductase (557 aa).

Residues C3, C6, C19, and C26 each coordinate [4Fe-4S] cluster. Residues H253, E277, C321, C408, C436, C461, E495, and K497 each coordinate hybrid [4Fe-2O-2S] cluster. A Cysteine persulfide modification is found at C408.

It belongs to the HCP family. Requires [4Fe-4S] cluster as cofactor. Hybrid [4Fe-2O-2S] cluster is required as a cofactor.

The protein localises to the cytoplasm. It carries out the reaction A + NH4(+) + H2O = hydroxylamine + AH2 + H(+). Functionally, catalyzes the reduction of hydroxylamine to form NH(3) and H(2)O. In Acidiphilium cryptum (strain JF-5), this protein is Hydroxylamine reductase.